The following is a 68-amino-acid chain: Beta-toxin Cl13 (68 aa).

The LCN-type CS-alpha/beta domain occupies Lys1–Lys66. Cystine bridges form between Cys12-Cys65, Cys16-Cys41, Cys25-Cys46, and Cys29-Cys48. Lys66 bears the Lysine amide mark.

Belongs to the long (4 C-C) scorpion toxin superfamily. Sodium channel inhibitor family. Beta subfamily. As to expression, expressed by the venom gland.

It is found in the secreted. Functionally, beta toxins bind voltage-independently at site-4 of sodium channels (Nav) and shift the voltage of activation toward more negative potentials thereby affecting sodium channel activation and promoting spontaneous and repetitive firing. Inhibits sodium channels Nav1.4/SCN4A, Nav1.5/SCN5A and Nav1.6/SCN8A. Also has a weak inhibitory effect on Nav1.2/SCN2A. Is lethal to mice. The polypeptide is Beta-toxin Cl13 (Centruroides limpidus (Mexican scorpion)).